We begin with the raw amino-acid sequence, 154 residues long: Superoxide dismutase [Cu-Zn] 1 (154 aa).

Histidine 47, histidine 49, and histidine 64 together coordinate Cu cation. Cysteine 58 and cysteine 147 form a disulfide bridge. Histidine 64, histidine 72, histidine 81, and aspartate 84 together coordinate Zn(2+). A Cu cation-binding site is contributed by histidine 121. Residue arginine 144 participates in substrate binding.

Belongs to the Cu-Zn superoxide dismutase family. In terms of assembly, homodimer. Cu cation is required as a cofactor. The cofactor is Zn(2+).

The protein localises to the cytoplasm. The enzyme catalyses 2 superoxide + 2 H(+) = H2O2 + O2. Functionally, destroys radicals which are normally produced within the cells and which are toxic to biological systems. The protein is Superoxide dismutase [Cu-Zn] 1 (SOD1) of Debaryomyces hansenii (strain ATCC 36239 / CBS 767 / BCRC 21394 / JCM 1990 / NBRC 0083 / IGC 2968) (Yeast).